The following is a 162-amino-acid chain: Peptide methionine sulfoxide reductase MsrA (162 aa).

Cysteine 10 is a catalytic residue.

The protein belongs to the MsrA Met sulfoxide reductase family.

It carries out the reaction L-methionyl-[protein] + [thioredoxin]-disulfide + H2O = L-methionyl-(S)-S-oxide-[protein] + [thioredoxin]-dithiol. The catalysed reaction is [thioredoxin]-disulfide + L-methionine + H2O = L-methionine (S)-S-oxide + [thioredoxin]-dithiol. Its function is as follows. Has an important function as a repair enzyme for proteins that have been inactivated by oxidation. Catalyzes the reversible oxidation-reduction of methionine sulfoxide in proteins to methionine. The protein is Peptide methionine sulfoxide reductase MsrA of Clostridium acetobutylicum (strain ATCC 824 / DSM 792 / JCM 1419 / IAM 19013 / LMG 5710 / NBRC 13948 / NRRL B-527 / VKM B-1787 / 2291 / W).